The following is a 377-amino-acid chain: RNA polymerase sigma factor SigA (377 aa).

The interval 72 to 92 (EVSNLRQGEDHDGNDNDDFNF) is disordered. Residues 144-214 (LAEANLRLVV…TRAIADQART (71 aa)) are sigma-70 factor domain-2. An Interaction with polymerase core subunit RpoC motif is present at residues 168–171 (DLIQ). Residues 223–299 (ETINKLIRVS…DQEALTPADA (77 aa)) form a sigma-70 factor domain-3 region. Residues 312–365 (VLDTLTEREENVLRLRFGLDDGRTRTLEEVGKVFGVTRERIRQIEAKALRKLRH) form a sigma-70 factor domain-4 region. Positions 338–357 (LEEVGKVFGVTRERIRQIEA) form a DNA-binding region, H-T-H motif.

The protein belongs to the sigma-70 factor family. RpoD/SigA subfamily. In terms of assembly, interacts transiently with the RNA polymerase catalytic core.

It localises to the cytoplasm. In terms of biological role, sigma factors are initiation factors that promote the attachment of RNA polymerase to specific initiation sites and are then released. This sigma factor is the primary sigma factor during exponential growth. In Bacillus sp, this protein is RNA polymerase sigma factor SigA.